A 162-amino-acid polypeptide reads, in one-letter code: Large ribosomal subunit protein uL10 (162 aa).

This sequence belongs to the universal ribosomal protein uL10 family. As to quaternary structure, part of the ribosomal stalk of the 50S ribosomal subunit. The N-terminus interacts with L11 and the large rRNA to form the base of the stalk. The C-terminus forms an elongated spine to which L12 dimers bind in a sequential fashion forming a multimeric L10(L12)X complex.

Forms part of the ribosomal stalk, playing a central role in the interaction of the ribosome with GTP-bound translation factors. The sequence is that of Large ribosomal subunit protein uL10 from Borreliella afzelii (strain PKo) (Borrelia afzelii).